Reading from the N-terminus, the 422-residue chain is Aspartate--tRNA(Asp/Asn) ligase (422 aa).

E158 contacts L-aspartate. An aspartate region spans residues Q180–K183. Position 201 (R201) interacts with L-aspartate. Residues R201–E203, R209–L211, and E345 contribute to the ATP site. L-aspartate-binding residues include S348 and R352. Residue G393–R396 coordinates ATP.

Belongs to the class-II aminoacyl-tRNA synthetase family. Type 2 subfamily. Homodimer. Makes part of a ribonucleoprotein particle (RNP) called transamidosome that allows channelling of the aa-tRNA from non-discriminating aspartyl-tRNA synthetase active site to the GatCAB amidotransferase site. The transamidosome complex is formed by two GatCABs, one dimeric ND-AspRSs and two tRNAs(Asn) molecules.

It localises to the cytoplasm. It carries out the reaction tRNA(Asx) + L-aspartate + ATP = L-aspartyl-tRNA(Asx) + AMP + diphosphate. In terms of biological role, aspartyl-tRNA synthetase with relaxed tRNA specificity since it is able to aspartylate not only its cognate tRNA(Asp) but also tRNA(Asn) with similar efficiencies. Reaction proceeds in two steps: L-aspartate is first activated by ATP to form Asp-AMP and then transferred to the acceptor end of tRNA(Asp/Asn). This Thermus thermophilus (strain ATCC 27634 / DSM 579 / HB8) protein is Aspartate--tRNA(Asp/Asn) ligase (aspS2).